Here is a 202-residue protein sequence, read N- to C-terminus: Peptide deformylase 2 (202 aa).

Fe cation is bound by residues Cys-120 and His-162. Glu-163 is an active-site residue. A Fe cation-binding site is contributed by His-166.

Belongs to the polypeptide deformylase family. Fe(2+) is required as a cofactor.

It catalyses the reaction N-terminal N-formyl-L-methionyl-[peptide] + H2O = N-terminal L-methionyl-[peptide] + formate. Its function is as follows. Removes the formyl group from the N-terminal Met of newly synthesized proteins. Requires at least a dipeptide for an efficient rate of reaction. N-terminal L-methionine is a prerequisite for activity but the enzyme has broad specificity at other positions. The protein is Peptide deformylase 2 of Rickettsia conorii (strain ATCC VR-613 / Malish 7).